The following is a 538-amino-acid chain: Syncytin-1 (538 aa).

The N-terminal stretch at 1–20 (MALPYHIFLFTVLLPSFTLT) is a signal peptide. Over 21–443 (APPPCRCMTS…NTGPWGLLSQ (423 aa)) the chain is Extracellular. An N-linked (GlcNAc...) asparagine glycan is attached at Asn169. A CXXC motif is present at residues 186 to 189 (CWIC). Intrachain disulfides connect Cys186/Cys189, Cys186/Cys405, and Cys397/Cys404. Residues Asn208, Asn214, Asn234, Asn242, and Asn281 are each glycosylated (N-linked (GlcNAc...) asparagine). The segment at 320–340 (ILPFVIGAGVLGALGTGIGGI) is fusion peptide. Residues 380–396 (LQNRRALDLLTAERGGT) are immunosuppression. Residues 397 to 406 (CLFLGEECCY) carry the CX6CC motif. Asn409 carries N-linked (GlcNAc...) asparagine glycosylation. A helical transmembrane segment spans residues 444–464 (WMPWILPFLGPLAAIILLLLF). The tract at residues 465–484 (GPCIFNLLVNFVSSRIEAVK) is essential for the fusiogenic function. Topologically, residues 465-538 (GPCIFNLLVN…LLRPNSAGSS (74 aa)) are cytoplasmic. Residues 496–538 (KIYRRPLDRPASPRSDVNDIKGTPPEEISAAQPLLRPNSAGSS) are disordered.

This sequence belongs to the gamma type-C retroviral envelope protein family. HERV class-I W env subfamily. As to quaternary structure, the mature envelope protein (Env) consists of a trimer of SU-TM heterodimers attached probably by a labile interchain disulfide bond. Interacts with the C-type lectin CD209/DC-SIGN. Specific enzymatic cleavages in vivo yield mature proteins. Envelope glycoproteins are synthesized as an inactive precursor that is heavily N-glycosylated and processed likely by furin in the Golgi to yield the mature SU and TM proteins. The cleavage site between SU and TM requires the minimal sequence [KR]-X-[KR]-R. The intracytoplasmic tail cleavage by the viral protease that is required for the fusiogenic activity of some retroviruses envelope proteins seems to have been lost during evolution. Post-translationally, the CXXC motif is highly conserved across a broad range of retroviral envelope proteins. It is thought to participate in the formation of a labile disulfide bond possibly with the CX6CC motif present in the transmembrane protein. Isomerization of the intersubunit disulfide bond to an SU intrachain disulfide bond is thought to occur upon receptor recognition in order to allow membrane fusion. In terms of tissue distribution, expressed at higher level in placental syncytiotrophoblast. Expressed at intermediate level in testis. Seems also to be found at low level in adrenal tissue, bone marrow, breast, colon, kidney, ovary, prostate, skin, spleen, thymus, thyroid, brain and trachea. Both mRNA and protein levels are significantly increased in the brain of individuals with multiple sclerosis, particularly in astrocytes and microglia.

The protein resides in the cell membrane. Its subcellular location is the virion. In terms of biological role, this endogenous retroviral envelope protein has retained its original fusogenic properties and participates in trophoblast fusion and the formation of a syncytium during placenta morphogenesis. May induce fusion through binding of SLC1A4 and SLC1A5. Its function is as follows. Endogenous envelope proteins may have kept, lost or modified their original function during evolution. Retroviral envelope proteins mediate receptor recognition and membrane fusion during early infection. The surface protein (SU) mediates receptor recognition, while the transmembrane protein (TM) acts as a class I viral fusion protein. The protein may have at least 3 conformational states: pre-fusion native state, pre-hairpin intermediate state, and post-fusion hairpin state. During viral and target cell membrane fusion, the coiled coil regions (heptad repeats) assume a trimer-of-hairpins structure, positioning the fusion peptide in close proximity to the C-terminal region of the ectodomain. The formation of this structure appears to drive apposition and subsequent fusion of membranes. The chain is Syncytin-1 (ERVW-1) from Homo sapiens (Human).